The primary structure comprises 148 residues: Deoxyuridine 5'-triphosphate nucleotidohydrolase (148 aa).

Substrate contacts are provided by residues 67–69 (RSG), Asn-80, 84–86 (LID), and Met-94.

It belongs to the dUTPase family. The cofactor is Mg(2+).

The catalysed reaction is dUTP + H2O = dUMP + diphosphate + H(+). The protein operates within pyrimidine metabolism; dUMP biosynthesis; dUMP from dCTP (dUTP route): step 2/2. This enzyme is involved in nucleotide metabolism: it produces dUMP, the immediate precursor of thymidine nucleotides and it decreases the intracellular concentration of dUTP so that uracil cannot be incorporated into DNA. This chain is Deoxyuridine 5'-triphosphate nucleotidohydrolase, found in Paraburkholderia phymatum (strain DSM 17167 / CIP 108236 / LMG 21445 / STM815) (Burkholderia phymatum).